Consider the following 121-residue polypeptide: HTH-type transcriptional regulator MerD (121 aa).

An HTH merR-type domain is found at 3 to 72 (AYPVSRLALD…LDALARLCRA (70 aa)). Residues 6–25 (VSRLALDAGVSVHIVRDYLL) constitute a DNA-binding region (H-T-H motif).

In Pseudomonas aeruginosa, this protein is HTH-type transcriptional regulator MerD (merD).